We begin with the raw amino-acid sequence, 51 residues long: Insulin (51 aa).

Intrachain disulfides connect cysteine 7/cysteine 37, cysteine 19/cysteine 50, and cysteine 36/cysteine 41.

Belongs to the insulin family. In terms of assembly, heterodimer of a B chain and an A chain linked by two disulfide bonds.

The protein localises to the secreted. Insulin decreases blood glucose concentration. It increases cell permeability to monosaccharides, amino acids and fatty acids. It accelerates glycolysis, the pentose phosphate cycle, and glycogen synthesis in liver. In Didelphis virginiana (North American opossum), this protein is Insulin (INS).